Reading from the N-terminus, the 393-residue chain is NAD(P)H-quinone oxidoreductase subunit H, chloroplastic (393 aa).

The protein belongs to the complex I 49 kDa subunit family. In terms of assembly, NDH is composed of at least 16 different subunits, 5 of which are encoded in the nucleus.

The protein resides in the plastid. It is found in the chloroplast thylakoid membrane. The enzyme catalyses a plastoquinone + NADH + (n+1) H(+)(in) = a plastoquinol + NAD(+) + n H(+)(out). The catalysed reaction is a plastoquinone + NADPH + (n+1) H(+)(in) = a plastoquinol + NADP(+) + n H(+)(out). Its function is as follows. NDH shuttles electrons from NAD(P)H:plastoquinone, via FMN and iron-sulfur (Fe-S) centers, to quinones in the photosynthetic chain and possibly in a chloroplast respiratory chain. The immediate electron acceptor for the enzyme in this species is believed to be plastoquinone. Couples the redox reaction to proton translocation, and thus conserves the redox energy in a proton gradient. The sequence is that of NAD(P)H-quinone oxidoreductase subunit H, chloroplastic from Psilotum nudum (Whisk fern).